The chain runs to 541 residues: Eukaryotic translation initiation factor 3 subunit L (541 aa).

Residues 308–516 form the PCI domain; sequence TFSDILLYIQ…IHIADTKVSH (209 aa).

It belongs to the eIF-3 subunit L family. Component of the eukaryotic translation initiation factor 3 (eIF-3) complex. The eIF-3 complex interacts with pix.

It localises to the cytoplasm. Its function is as follows. Component of the eukaryotic translation initiation factor 3 (eIF-3) complex, which is involved in protein synthesis of a specialized repertoire of mRNAs and, together with other initiation factors, stimulates binding of mRNA and methionyl-tRNAi to the 40S ribosome. The eIF-3 complex specifically targets and initiates translation of a subset of mRNAs involved in cell proliferation. This is Eukaryotic translation initiation factor 3 subunit L from Drosophila pseudoobscura pseudoobscura (Fruit fly).